The chain runs to 252 residues: Octanoyltransferase (252 aa).

Residues 56–237 (ADTGDEIWLV…RLIANLDGAS (182 aa)) form the BPL/LPL catalytic domain. Residues 96 to 103 (RGGQITYH), 168 to 170 (ALG), and 181 to 183 (GLS) each bind substrate. Residue C199 is the Acyl-thioester intermediate of the active site.

It belongs to the LipB family.

Its subcellular location is the cytoplasm. It carries out the reaction octanoyl-[ACP] + L-lysyl-[protein] = N(6)-octanoyl-L-lysyl-[protein] + holo-[ACP] + H(+). The protein operates within protein modification; protein lipoylation via endogenous pathway; protein N(6)-(lipoyl)lysine from octanoyl-[acyl-carrier-protein]: step 1/2. In terms of biological role, catalyzes the transfer of endogenously produced octanoic acid from octanoyl-acyl-carrier-protein onto the lipoyl domains of lipoate-dependent enzymes. Lipoyl-ACP can also act as a substrate although octanoyl-ACP is likely to be the physiological substrate. This Burkholderia lata (strain ATCC 17760 / DSM 23089 / LMG 22485 / NCIMB 9086 / R18194 / 383) protein is Octanoyltransferase.